The sequence spans 136 residues: Large ribosomal subunit protein uL16 (136 aa).

Belongs to the universal ribosomal protein uL16 family. In terms of assembly, part of the 50S ribosomal subunit.

Functionally, binds 23S rRNA and is also seen to make contacts with the A and possibly P site tRNAs. In Vibrio campbellii (strain ATCC BAA-1116), this protein is Large ribosomal subunit protein uL16.